A 404-amino-acid polypeptide reads, in one-letter code: Mitochondrial intermembrane space import and assembly protein 40 (404 aa).

Residues 1-34 (MVSAVSRQLVNRQLNRVLLRNARIAPFARATRFY) constitute a mitochondrion transit peptide. Residues 35-50 (SSKYAQESENAKRHKM) lie on the Mitochondrial matrix side of the membrane. The chain crosses the membrane as a helical; Signal-anchor for type II membrane protein span at residues 51-71 (GLLIAGVAVAGAIVFVTPPQW). Residues 72–404 (KKYFRAAKKV…PDEDTASKKD (333 aa)) lie on the Mitochondrial intermembrane side of the membrane. A disordered region spans residues 84 to 287 (VAESKEDPVS…SAYNPDTGEI (204 aa)). Over residues 101–113 (ESVQESTEEPQQS) the composition is skewed to low complexity. Residues 124-135 (EQAQDESASSGD) are compositionally biased toward polar residues. 3 stretches are compositionally biased toward basic and acidic residues: residues 136–156 (SEAK…EKES), 226–237 (EEDKTPKAEELK), and 246–276 (EEPK…EVKQ). 3 cysteine pairs are disulfide-bonded: Cys-291-Cys-293, Cys-302-Cys-335, and Cys-312-Cys-325. The CHCH domain occupies 299-343 (HGPCGEEFKAAFSCFVYSEAEPKGIDCVEKFQHMQDCFRRYPEHY). Short sequence motifs (cx9C motif) lie at residues 302 to 312 (CGEEFKAAFSC) and 325 to 335 (CVEKFQHMQDC). The tract at residues 346–404 (QLADPADDENVDHEKNLSEGKDTGVDSTPPKDEAYLKTEKEKKIEENASPDEDTASKKD) is disordered. Positions 357 to 391 (DHEKNLSEGKDTGVDSTPPKDEAYLKTEKEKKIEE) are enriched in basic and acidic residues.

In terms of assembly, monomer. Requires Cu(2+) as cofactor. The cofactor is Zn(2+).

The protein localises to the mitochondrion inner membrane. Its function is as follows. Required for the import and folding of small cysteine-containing proteins (small Tim) in the mitochondrial intermembrane space (IMS). Forms a redox cycle with ERV1 that involves a disulfide relay system. Precursor proteins to be imported into the IMS are translocated in their reduced form into the mitochondria. The oxidized form of MIA40 forms a transient intermolecular disulfide bridge with the reduced precursor protein, resulting in oxidation of the precursor protein that now contains an intramolecular disulfide bond and is able to undergo folding in the IMS. This chain is Mitochondrial intermembrane space import and assembly protein 40 (MIA40), found in Candida glabrata (strain ATCC 2001 / BCRC 20586 / JCM 3761 / NBRC 0622 / NRRL Y-65 / CBS 138) (Yeast).